Consider the following 500-residue polypeptide: Trehalose-6-phosphate synthase (500 aa).

D-glucose 6-phosphate is bound at residue R28. UDP-alpha-D-glucose is bound at residue 48-49; the sequence is GG. D-glucose 6-phosphate is bound by residues Y104 and D158. 2 residues coordinate UDP-alpha-D-glucose: R300 and K305. R338 lines the D-glucose 6-phosphate pocket. 403-407 is a binding site for UDP-alpha-D-glucose; sequence LVAKE.

This sequence belongs to the glycosyltransferase 20 family. In terms of assembly, homotetramer.

It carries out the reaction ADP-alpha-D-glucose + D-glucose 6-phosphate = alpha,alpha-trehalose 6-phosphate + ADP + H(+). It catalyses the reaction CDP-alpha-D-glucose + D-glucose 6-phosphate = alpha,alpha-trehalose 6-phosphate + CDP + H(+). The catalysed reaction is GDP-alpha-D-glucose + D-glucose 6-phosphate = alpha,alpha-trehalose 6-phosphate + GDP + H(+). The enzyme catalyses TDP-alpha-D-glucose + D-glucose 6-phosphate = 5-methyl-UDP + alpha,alpha-trehalose 6-phosphate + H(+). It carries out the reaction D-glucose 6-phosphate + UDP-alpha-D-glucose = alpha,alpha-trehalose 6-phosphate + UDP + H(+). Its pathway is glycan biosynthesis; trehalose biosynthesis. In terms of biological role, probably involved in the osmoprotection via the biosynthesis of trehalose and in the production of glycogen and alpha-glucan via the TreS-Pep2 branch involved in the biosynthesis of maltose-1-phosphate (M1P). Catalyzes the transfer of glucose from UDP-glucose (UDP-Glc) to D-glucose 6-phosphate (Glc-6-P) to form trehalose-6-phosphate. Probably also able to use ADP-Glc, CDP-Glc, GDP-Glc and TDP-Glc as glucosyl donors. The chain is Trehalose-6-phosphate synthase from Mycobacterium marinum (strain ATCC BAA-535 / M).